The sequence spans 398 residues: Mitogen-activated protein kinase 1 (398 aa).

The segment at 1–26 is disordered; that stretch reads MDAGAQPPDTEMAEAGGGQQPPAAAA. Residues 67-352 enclose the Protein kinase domain; that stretch reads KPPILPIGKG…VEGALAHPYL (286 aa). ATP contacts are provided by residues 73 to 81 and Lys-96; that span reads IGKGAYGIV. The active-site Proton acceptor is Asp-193. Position 225 is a phosphothreonine (Thr-225). A TXY motif is present at residues 225 to 227; the sequence is TEY. The residue at position 227 (Tyr-227) is a Phosphotyrosine.

This sequence belongs to the protein kinase superfamily. CMGC Ser/Thr protein kinase family. MAP kinase subfamily. In terms of assembly, may interact with RAC1. Dually phosphorylated on Thr-225 and Tyr-227, which activates the enzyme.

The catalysed reaction is L-seryl-[protein] + ATP = O-phospho-L-seryl-[protein] + ADP + H(+). It catalyses the reaction L-threonyl-[protein] + ATP = O-phospho-L-threonyl-[protein] + ADP + H(+). Activated by threonine and tyrosine phosphorylation. Activated in response to sphingolipid elicitor (SE). In terms of biological role, involved in sphingolipid elicitor (SE)-dependent defense signaling pathway. Acts downstream of heterotrimeric G protein alpha subunit and small GTPase RAC1. May regulate the expression of various genes involved in biotic and abiotic stress response. Involved in an abscisic acid signaling pathway that regulates the activities of antioxidant enzymes and the production of hydrogen peroxide. Acts downstream of CCAMK. The polypeptide is Mitogen-activated protein kinase 1 (MPK1) (Oryza sativa subsp. japonica (Rice)).